The following is a 276-amino-acid chain: Large ribosomal subunit protein uL2 (276 aa).

A disordered region spans residues 224–276 (VMNPVDHPHGGGEGKAPIGRKSPMTPWGKPTLGFKTRKKKNKSDKFIIRRRKK). The segment covering 258–276 (KTRKKKNKSDKFIIRRRKK) has biased composition (basic residues).

This sequence belongs to the universal ribosomal protein uL2 family. In terms of assembly, part of the 50S ribosomal subunit. Forms a bridge to the 30S subunit in the 70S ribosome.

One of the primary rRNA binding proteins. Required for association of the 30S and 50S subunits to form the 70S ribosome, for tRNA binding and peptide bond formation. It has been suggested to have peptidyltransferase activity; this is somewhat controversial. Makes several contacts with the 16S rRNA in the 70S ribosome. This chain is Large ribosomal subunit protein uL2, found in Geobacillus sp. (strain WCH70).